The primary structure comprises 2035 residues: Proline-rich protein 12 (2035 aa).

4 disordered regions span residues 210–280, 292–311, 329–584, and 645–685; these read GGGV…ERAL, RPAS…LQHY, CSPL…GAPG, and QAPS…GTPY. A compositionally biased stretch (pro residues) spans 223–240; the sequence is QTPPYRPGPPDPPPPPRH. Residues 249–261 are compositionally biased toward low complexity; sequence ASSSAATAAEPSS. Positions 296–305 are enriched in pro residues; it reads AQPPPPPPPA. 2 positions are modified to phosphoserine: Ser330 and Ser338. Low complexity predominate over residues 338-364; the sequence is SPGAGEPSKGGPSGATAGAAGRATGPE. Residues 365–377 show a composition bias toward gly residues; the sequence is TAGGGAAGGGGGY. Composition is skewed to low complexity over residues 408–429 and 437–455; these read STAT…AGKA and SQAY…QAYG. Pro residues predominate over residues 476–487; sequence PPQPPSGPPPPG. Composition is skewed to polar residues over residues 490-501 and 520-534; these read TCQSYSPDQLQG and GLPT…STGH. Over residues 540–555 the composition is skewed to gly residues; that stretch reads GHGGGWGPSSLGGGGE. Ser648 carries the post-translational modification Phosphoserine. Residues 670-681 show a composition bias toward gly residues; that stretch reads GLGGSGGAGGAP. Position 735 is a phosphothreonine (Thr735). 4 disordered regions span residues 755 to 844, 851 to 870, 879 to 920, and 946 to 1061; these read AFLQ…PLQL, HGLE…SLEP, GALE…APRF, and EMFG…CSTK. Residues 830 to 841 are compositionally biased toward pro residues; it reads PQPPPPPPPPMP. At Ser859 the chain carries Phosphoserine. A compositionally biased stretch (pro residues) spans 1031–1046; that stretch reads SAPPPPPPPPPPPPVS. Residues Ser1070 and Ser1128 each carry the phosphoserine modification. 4 disordered regions span residues 1112–1244, 1288–1355, 1367–1567, and 1662–1839; these read RRLP…DHNS, PLYQ…SPCK, TLPS…GEGI, and HRPP…PGRL. Residues 1190–1199 are compositionally biased toward basic residues; the sequence is KPRGRGRGRG. A compositionally biased stretch (basic and acidic residues) spans 1200–1214; that stretch reads RKAEEMGGTRLEPLK. N6-acetyllysine is present on Lys1214. Thr1295 is subject to Phosphothreonine. The residue at position 1299 (Ser1299) is a Phosphoserine. A compositionally biased stretch (pro residues) spans 1314–1329; that stretch reads QPPPPTVPTVPHPAPS. Residues Ser1372, Ser1373, and Ser1378 each carry the phosphoserine modification. Over residues 1449–1529 the composition is skewed to pro residues; it reads PPTPPPAPTP…PPEEPPAPSP (81 aa). The segment covering 1535–1547 has biased composition (basic and acidic residues); the sequence is PDARPLHLAKKQE. Thr1555 carries the phosphothreonine modification. Position 1562 is a phosphoserine (Ser1562). Positions 1698–1709 are enriched in basic and acidic residues; it reads ETPEKMTSEKPP. Thr1699 is subject to Phosphothreonine. Residues 1710–1730 are compositionally biased toward pro residues; the sequence is EPAPEPAVPEPPAPEKPSPPR. Positions 1731–1768 are enriched in basic and acidic residues; it reads PVEKEKEKEKEKEKEKERVTRPLRSERATSGRQMRTDR. A compositionally biased stretch (polar residues) spans 1769–1779; sequence SLATGQSTTSR. Low complexity predominate over residues 1817–1828; sequence SSSDSESSPGAP. A Phosphoserine modification is found at Ser1924.

Expressed in brain.

Its subcellular location is the nucleus. It localises to the postsynaptic density. The protein resides in the synapse. The protein localises to the synaptosome. This chain is Proline-rich protein 12, found in Mus musculus (Mouse).